Reading from the N-terminus, the 521-residue chain is MLLLLLLLLPLCWAVEVKRPRGVSLSNHHFYEESKPFTCLDGTATIPFDQVNDDYCDCKDGSDEPGTAACPNGSFHCTNTGYKPLYILSSRVNDGVCDCCDGTDEYNSGTVCENTCREKGRKEKESLQQLAEVTREGFRLKKILIEEWKTAREEKQSKLLELQAGKKSLEDQVETLRAAKEEAERPEKEAKDQHRKLWEEQQAAAKARREQERAASAFQELDDNMDGMVSLAELQTHPELDTDGDGALSEEEAQALLSGDTQTDTTSFYDRVWAAIRDKYRSEVPPTDIPVPEETEPKEEKPPVLPPTEEEEEEEEEPEEEEEEEEEEEEAPPPLQPPQPPSPTEDEKMPPYDEETQAIIDAAQEARSKFEEVERSLKEMEESIRSLEQEISFDFGPSGEFAYLYSQCYELTTNEYVYRLCPFKLVSQKPKHGGSPTSLGTWGSWAGPDHDKFSAMKYEQGTGCWQGPNRSTTVRLLCGKETVVTSTTEPSRCEYLMELMTPAACPEPPPEAPSDGDHDEL.

The signal sequence occupies residues 1-14 (MLLLLLLLLPLCWA). A Phosphoserine modification is found at Ser-24. 2 LDL-receptor class A domains span residues 37-71 (FTCLDGTATIPFDQVNDDYCDCKDGSDEPGTAACP) and 69-113 (ACPN…TVCE). 2 cysteine pairs are disulfide-bonded: Cys-39–Cys-58 and Cys-56–Cys-70. Asp-49 contacts substrate. Residues Gln-50, Asp-53, Tyr-55, Asp-57, Asp-63, and Glu-64 each contribute to the Ca(2+) site. Residue Asp-53 participates in substrate binding. N-linked (GlcNAc...) asparagine glycosylation is present at Asn-72. 3 disulfides stabilise this stretch: Cys-77/Cys-99, Cys-97/Cys-112, and Cys-100/Cys-116. A Phosphoserine; by PKC modification is found at Ser-89. Ca(2+) contacts are provided by Arg-91, Asp-94, Val-96, Asp-98, Asp-104, and Glu-105. Lys-166 carries the N6-succinyllysine modification. The residue at position 168 (Ser-168) is a Phosphoserine. 2 EF-hand domains span residues 209–244 (REQERAASAFQELDDNMDGMVSLAELQTHPELDTDG) and 245–290 (DGAL…TDIP). Residues Asp-222, Asn-224, Asp-226, Met-228, and Glu-233 each coordinate Ca(2+). Disordered regions lie at residues 226-267 (DGMV…DTTS) and 280-350 (YRSE…EKMP). Composition is skewed to acidic residues over residues 241–253 (DTDGDGALSEEEA) and 308–331 (TEEEEEEEEEPEEEEEEEEEEEEA). Positions 332–343 (PPPLQPPQPPSP) are enriched in pro residues. A phosphoserine; by PKC mark is found at Ser-376 and Ser-383. One can recognise an MRH domain in the interval 406-507 (SQCYELTTNE…ELMTPAACPE (102 aa)). Cys-408 and Cys-421 are joined by a disulfide. At Ser-427 the chain carries Phosphoserine; by PKC. 2 disulfide bridges follow: Cys-464/Cys-493 and Cys-478/Cys-505. Asn-469 is a glycosylation site (N-linked (GlcNAc...) asparagine). The Prevents secretion from ER motif lies at 518-521 (HDEL).

Heterodimer of a catalytic alpha subunit (GANAB) and a beta subunit (PRKCSH). Binds glycosylated PTPRC. As to expression, expressed in kidney (at protein level).

Its subcellular location is the endoplasmic reticulum. The protein operates within glycan metabolism; N-glycan metabolism. Functionally, regulatory subunit of glucosidase II that cleaves sequentially the 2 innermost alpha-1,3-linked glucose residues from the Glc(2)Man(9)GlcNAc(2) oligosaccharide precursor of immature glycoproteins. Required for efficient PKD1/Polycystin-1 biogenesis and trafficking to the plasma membrane of the primary cilia. The protein is Glucosidase 2 subunit beta of Mus musculus (Mouse).